The sequence spans 423 residues: Gamma-glutamyl phosphate reductase (423 aa).

Belongs to the gamma-glutamyl phosphate reductase family.

It localises to the cytoplasm. The enzyme catalyses L-glutamate 5-semialdehyde + phosphate + NADP(+) = L-glutamyl 5-phosphate + NADPH + H(+). It participates in amino-acid biosynthesis; L-proline biosynthesis; L-glutamate 5-semialdehyde from L-glutamate: step 2/2. In terms of biological role, catalyzes the NADPH-dependent reduction of L-glutamate 5-phosphate into L-glutamate 5-semialdehyde and phosphate. The product spontaneously undergoes cyclization to form 1-pyrroline-5-carboxylate. The sequence is that of Gamma-glutamyl phosphate reductase from Pseudomonas fluorescens (strain Pf0-1).